The sequence spans 688 residues: Soluble guanylate cyclase gcy-35 (688 aa).

Position 105 (histidine 105) interacts with heme. A coiled-coil region spans residues leucine 358–methionine 401. One can recognise a Guanylate cyclase domain in the interval threonine 424–glutamate 552. Aspartate 429 and aspartate 473 together coordinate Mg(2+). The interval valine 644–serine 688 is disordered. The segment covering asparagine 646–asparagine 659 has biased composition (low complexity).

The protein belongs to the adenylyl cyclase class-4/guanylyl cyclase family. As to quaternary structure, heterodimer; heterodimerizes with gcy-36, and possibly with other soluble guanylate cyclases. It depends on heme as a cofactor. As to expression, expressed in URX, AQR and PQR neurons. Also expressed in ALN, SDQ and BDU neurons, and variably in AVM, PLM and PLN neurons, pharyngeal and body wall muscles, and the excretory cell.

It is found in the cytoplasm. Its subcellular location is the cell projection. The protein resides in the dendrite. It catalyses the reaction GTP = 3',5'-cyclic GMP + diphosphate. Regulated by molecular oxygen, which binds to the heme binding site. Probably not activated by nitric oxide (NO). In terms of biological role, plays a central role in social feeding behavior and oxygen sensation by synthesizing 3',5'-cyclic guanosine monophosphate (cGMP) from GTP. Oxygen, which binds to its heme-binding sites, probably regulates social behavior by modulating its activity. cGMP is a common second messenger in sensory transduction and is implicated in oxygen sensation. Indeed, C.elegans exhibits a strong behavioral preference for 5-12% oxygen, avoiding higher and lower oxygen levels; a higher level of oxygen inducing a naturally polymorphic social feeding behavior. Involved in avoidance of hyperoxia and for oxygen-induced aggregation and bordering, probably by mediating oxygen-sensing in URX, AQR and PQR sensory neurons. The protein is Soluble guanylate cyclase gcy-35 (gcy-35) of Caenorhabditis elegans.